An 881-amino-acid polypeptide reads, in one-letter code: Putative outer membrane usher protein YfcU (881 aa).

The first 29 residues, M1 to A29, serve as a signal peptide directing secretion.

Belongs to the fimbrial export usher family.

The protein localises to the cell outer membrane. Functionally, part of the yfcOPQRSUV fimbrial operon. Could contribute to adhesion to various surfaces in specific environmental niches. Increases adhesion to eukaryotic T24 bladder epithelial cells in the absence of fim genes. Probably involved in the export and assembly of fimbrial subunits across the outer membrane. The polypeptide is Putative outer membrane usher protein YfcU (yfcU) (Escherichia coli (strain K12)).